A 52-amino-acid chain; its full sequence is MEKVQYLTRSAIRRASTIEMPQQARQKLQNLFINFCLILICLLLICIIVMLL.

The residue at position 1 (methionine 1) is an N-acetylmethionine. The Cytoplasmic portion of the chain corresponds to 1–31 (MEKVQYLTRSAIRRASTIEMPQQARQKLQNL). Serine 16 is subject to Phosphoserine; by PKA and DMPK. Positions 16–22 (STIEMPQ) are involved in HAX1 binding. At threonine 17 the chain carries Phosphothreonine; by CaMK2. A helical membrane pass occupies residues 32 to 52 (FINFCLILICLLLICIIVMLL). Cysteine 36 carries S-palmitoyl cysteine lipidation.

Belongs to the phospholamban family. In terms of assembly, homopentamer. Can also form heterooligomers with other sarcoplasmic/endoplasmic reticulum calcium ATPase (SERCA) regulators ARLN, ERLN, SLN and STRIT1/DWORF. Monomer. Interacts with HAX1. Interacts as a monomer with ATP2A2; the interaction decreases ATP2A2 Ca(2+) affinity. Interacts with VMP1; VMP1 competes with PLN and SLN to prevent them from forming an inhibitory complex with ATP2A2. Interacts with S100A1 in a Ca(2+)-dependent manner. Post-translationally, phosphorylation by PKA abolishes the inhibition of ATP2A2-mediated calcium uptake. Phosphorylated at Thr-17 by CaMK2, and in response to beta-adrenergic stimulation. Phosphorylation by DMPK may stimulate sarcoplasmic reticulum calcium uptake in cardiomyocytes. Palmitoylated by ZDHHC16, promoting formation of the homopentamer. In terms of processing, in elongated spermatids, proteolytically cleaved by SPPL2C which modulates intracellular Ca(2+) homeostasis. Heart muscle (at protein level).

Its subcellular location is the endoplasmic reticulum membrane. The protein localises to the sarcoplasmic reticulum membrane. The protein resides in the mitochondrion membrane. It localises to the membrane. Its function is as follows. Reversibly inhibits the activity of ATP2A2/SERCA2 in cardiac sarcoplasmic reticulum by decreasing the apparent affinity of the ATPase for Ca(2+). Binds preferentially to the ATP-bound E1 conformational form of ATP2A2 which predominates at low Ca(2+) concentrations during the diastolic phase of the cardiac cycle. Inhibits ATP2A2 Ca(2+) affinity by disrupting its allosteric activation by ATP. Modulates the contractility of the heart muscle in response to physiological stimuli via its effects on ATP2A2. Modulates calcium re-uptake during muscle relaxation and plays an important role in calcium homeostasis in the heart muscle. The degree of ATP2A2 inhibition depends on the oligomeric state of PLN. ATP2A2 inhibition is alleviated by PLN phosphorylation. Also inhibits the activity of ATP2A3/SERCA3. Controls intracellular Ca(2+) levels in elongated spermatids and may play a role in germ cell differentiation. In the thalamic reticular nucleus of the brain, plays a role in the regulation of sleep patterns and executive functioning. The sequence is that of Phospholamban from Homo sapiens (Human).